Consider the following 383-residue polypeptide: MDQTLSRRLFLWHNPQTDNQCRNERHMIHTSKIYREINRIGVQIKGLPDYWMGQARRISYDRVGSAGNTITEGRKPVSADMAILLIYQPRGLLESLFLQLEHLLSKGLGVVIVSNRKVLEHDRNRLSEYCHLIIERKNIGYDFGGYRDGILALHKRSIHPKSLFVMNDSVWFPIRKDCDLIDRCRESRSDIVGVFYNNKSKFPKNHHLQSYFYRFGEKVVSDSRFLAYWRKIPMYNDKRNVIRNLEIKLTKNFQLMGFGISSLYAPEDILKAFKNIEVRNIRPVLDYYISALGYDQNTFWSAYKNESPKGGDTHALPIDVPNSRVFFHFLDAHPEILIRKLNSPIIKKNRDKRFVAQRKAIIEGGFLKEIDAVIQKELINWDR.

To V.anguillarum virulence protein VirA.

Its function is as follows. Could have an enzymatic function. This is an uncharacterized protein from Sinorhizobium fredii (strain NBRC 101917 / NGR234).